Reading from the N-terminus, the 98-residue chain is ATP synthase subunit c (98 aa).

A run of 2 helical transmembrane segments spans residues 27-47 (ALAL…GLGL) and 73-93 (IIGA…FFVV).

The protein belongs to the ATPase C chain family. As to quaternary structure, F-type ATPases have 2 components, F(1) - the catalytic core - and F(0) - the membrane proton channel. F(1) has five subunits: alpha(3), beta(3), gamma(1), delta(1), epsilon(1). F(0) has three main subunits: a(1), b(2) and c(10-14). The alpha and beta chains form an alternating ring which encloses part of the gamma chain. F(1) is attached to F(0) by a central stalk formed by the gamma and epsilon chains, while a peripheral stalk is formed by the delta and b chains.

It is found in the cell inner membrane. Functionally, f(1)F(0) ATP synthase produces ATP from ADP in the presence of a proton or sodium gradient. F-type ATPases consist of two structural domains, F(1) containing the extramembraneous catalytic core and F(0) containing the membrane proton channel, linked together by a central stalk and a peripheral stalk. During catalysis, ATP synthesis in the catalytic domain of F(1) is coupled via a rotary mechanism of the central stalk subunits to proton translocation. In terms of biological role, key component of the F(0) channel; it plays a direct role in translocation across the membrane. A homomeric c-ring of between 10-14 subunits forms the central stalk rotor element with the F(1) delta and epsilon subunits. This is ATP synthase subunit c from Protochlamydia amoebophila (strain UWE25).